Consider the following 1444-residue polypeptide: Bromodomain-containing protein 4 (1444 aa).

Disordered regions lie at residues 1–44, 154–217, 279–362, 492–523, 540–645, 722–986, and 1020–1422; these read MGDG…PKRQ, VEIS…PQPI, AAPP…KQQE, PVMATASSSDTSSDSSSESESSTDDSEEERAQ, AALS…GGAA, CLRK…SSQP, and TSLM…RREA. The segment covering 11–27 has biased composition (low complexity); the sequence is SGSSSSQGQPSSQAPSS. The Bromo 1 domain occupies 43–149; the sequence is RQTNQLQYLL…KVFLTKISEM (107 aa). Over residues 186–196 the composition is skewed to polar residues; sequence ASPQTRGLSNL. A compositionally biased stretch (pro residues) spans 206 to 216; it reads PQGPPTLPPQP. Polar residues predominate over residues 303–319; that stretch reads TTTPTANDQLNESSPAE. The segment covering 327–347 has biased composition (basic and acidic residues); sequence PRRDNTRPSKLPKKEAPDSQH. The Bromo 2 domain occupies 358–467; the sequence is PKQQEQLRYC…DVFEMRFAKM (110 aa). A compositionally biased stretch (low complexity) spans 498-511; the sequence is SSSDTSSDSSSESE. Residues 498–517 form an NPS region region; that stretch reads SSSDTSSDSSSESESSTDDS. The segment at 538–610 is BID region; it reads QLAALSQPQA…SKKLSKKEGG (73 aa). The segment covering 549–569 has biased composition (basic residues); sequence KPKKKEKEKKEKKKDKHKKKA. An NET domain is found at 633–730; that stretch reads DTEEDLGLTG…SCLRKKKKPA (98 aa). Low complexity-rich tracts occupy residues 746-760, 800-823, 919-954, and 1036-1046; these read GTSSDSGSSSESSSS, LQPQTPALQPSIQLKQQQPQHPSP, LQQSTSQQQPPPQQTLVPPQQLQPQQQQPAPPQQQH, and PSLLQSVQVQS. Polar residues predominate over residues 1090–1109; sequence PLQTAQTQPGQHKVSMPSTK. Positions 1110-1121 are enriched in low complexity; sequence AQQIIQQQQATQ. Residues 1126 to 1444 form a C-terminal (CTD) region region; sequence RQHKADSYNS…LMAIFEENLF (319 aa). The segment covering 1151-1163 has biased composition (polar residues); that stretch reads QIPQYSLVHQSPS. Positions 1246–1255 are enriched in basic and acidic residues; sequence QDKEKFKQEP. Over residues 1282–1296 the composition is skewed to low complexity; sequence SSTTPSSGLKSSSDS. Basic and acidic residues predominate over residues 1298 to 1357; that stretch reads EQFRRAAREKEEREKALKAQVEQAEKDRLRKEQEKLRGRDEEDSIEPPRRPLEEPRRRQE. The segment covering 1367–1389 has biased composition (low complexity); that stretch reads QHQTQAQAQTLNPAQSPSASQPT. Positions 1405-1422 are enriched in basic and acidic residues; it reads QQREMARRREQERRRREA.

This sequence belongs to the BET family. Widely expressed.

It is found in the nucleus. The protein localises to the chromosome. Chromatin reader protein that recognizes and binds acetylated histones and plays a key role in transmission of epigenetic memory across cell divisions and transcription regulation. Remains associated with acetylated chromatin throughout the entire cell cycle and provides epigenetic memory for postmitotic G1 gene transcription by preserving acetylated chromatin status and maintaining high-order chromatin structure. During interphase, plays a key role in regulating the transcription of signal-inducible genes by associating with the P-TEFb complex and recruiting it to promoters. This Danio rerio (Zebrafish) protein is Bromodomain-containing protein 4 (brd4).